Reading from the N-terminus, the 149-residue chain is Cell division protein SepF (149 aa).

This sequence belongs to the SepF family. In terms of assembly, homodimer. Interacts with FtsZ.

It is found in the cytoplasm. Functionally, cell division protein that is part of the divisome complex and is recruited early to the Z-ring. Probably stimulates Z-ring formation, perhaps through the cross-linking of FtsZ protofilaments. Its function overlaps with FtsA. In Clostridium perfringens (strain ATCC 13124 / DSM 756 / JCM 1290 / NCIMB 6125 / NCTC 8237 / Type A), this protein is Cell division protein SepF.